The following is a 361-amino-acid chain: DNA polymerase IV 3 (361 aa).

Positions 12-192 (IIHVDMDAFY…LPVNKFHGVG (181 aa)) constitute a UmuC domain. The Mg(2+) site is built by Asp-16 and Asp-110. Glu-111 is a catalytic residue.

The protein belongs to the DNA polymerase type-Y family. Monomer. Mg(2+) is required as a cofactor.

The protein resides in the cytoplasm. It catalyses the reaction DNA(n) + a 2'-deoxyribonucleoside 5'-triphosphate = DNA(n+1) + diphosphate. In terms of biological role, poorly processive, error-prone DNA polymerase involved in untargeted mutagenesis. Copies undamaged DNA at stalled replication forks, which arise in vivo from mismatched or misaligned primer ends. These misaligned primers can be extended by PolIV. Exhibits no 3'-5' exonuclease (proofreading) activity. May be involved in translesional synthesis, in conjunction with the beta clamp from PolIII. The polypeptide is DNA polymerase IV 3 (dinB3) (Mesorhizobium japonicum (strain LMG 29417 / CECT 9101 / MAFF 303099) (Mesorhizobium loti (strain MAFF 303099))).